The sequence spans 63 residues: Large ribosomal subunit protein uL30 (63 aa).

This sequence belongs to the universal ribosomal protein uL30 family. In terms of assembly, part of the 50S ribosomal subunit.

The sequence is that of Large ribosomal subunit protein uL30 from Stenotrophomonas maltophilia (strain K279a).